Here is a 169-residue protein sequence, read N- to C-terminus: NADH-quinone oxidoreductase subunit B (169 aa).

[4Fe-4S] cluster contacts are provided by C42, C43, C107, and C136.

It belongs to the complex I 20 kDa subunit family. In terms of assembly, NDH-1 is composed of 14 different subunits. Subunits NuoB, C, D, E, F, and G constitute the peripheral sector of the complex. It depends on [4Fe-4S] cluster as a cofactor.

The protein resides in the cell inner membrane. It catalyses the reaction a quinone + NADH + 5 H(+)(in) = a quinol + NAD(+) + 4 H(+)(out). Its function is as follows. NDH-1 shuttles electrons from NADH, via FMN and iron-sulfur (Fe-S) centers, to quinones in the respiratory chain. The immediate electron acceptor for the enzyme in this species is believed to be ubiquinone. Couples the redox reaction to proton translocation (for every two electrons transferred, four hydrogen ions are translocated across the cytoplasmic membrane), and thus conserves the redox energy in a proton gradient. The protein is NADH-quinone oxidoreductase subunit B of Sulfurimonas denitrificans (strain ATCC 33889 / DSM 1251) (Thiomicrospira denitrificans (strain ATCC 33889 / DSM 1251)).